The following is a 715-amino-acid chain: Polyribonucleotide nucleotidyltransferase (715 aa).

The Mg(2+) site is built by aspartate 500 and aspartate 506. In terms of domain architecture, KH spans 567–634 (PKVKMIRINP…AYIESLVREA (68 aa)). The region spanning 637-712 (GELYEAKVTR…ERGRVDLSRK (76 aa)) is the S1 motif domain.

Belongs to the polyribonucleotide nucleotidyltransferase family. Mg(2+) is required as a cofactor.

The protein localises to the cytoplasm. The catalysed reaction is RNA(n+1) + phosphate = RNA(n) + a ribonucleoside 5'-diphosphate. Its function is as follows. Involved in mRNA degradation. Catalyzes the phosphorolysis of single-stranded polyribonucleotides processively in the 3'- to 5'-direction. The chain is Polyribonucleotide nucleotidyltransferase from Acholeplasma laidlawii (strain PG-8A).